The primary structure comprises 156 residues: Small ribosomal subunit protein uS7 (156 aa).

Belongs to the universal ribosomal protein uS7 family. Part of the 30S ribosomal subunit. Contacts proteins S9 and S11.

Its function is as follows. One of the primary rRNA binding proteins, it binds directly to 16S rRNA where it nucleates assembly of the head domain of the 30S subunit. Is located at the subunit interface close to the decoding center, probably blocks exit of the E-site tRNA. This is Small ribosomal subunit protein uS7 from Rhizobium leguminosarum bv. trifolii (strain WSM2304).